The primary structure comprises 235 residues: Glycerol-3-phosphate acyltransferase (235 aa).

6 helical membrane passes run 4–24, 56–76, 94–114, 122–142, 152–172, and 191–211; these read LIAILAISYLVGAIPTGIMAG, AVTLLDILKGIVAAVSIVAFF, LLAGMSAVIGHVFTVFAGFKG, AGMLIGIAPVSMLIVIGIFLL, VASILAAIAFPLIIAIRKYIF, and FHDSLDYHLMIFGLIVALAIL.

This sequence belongs to the PlsY family. In terms of assembly, probably interacts with PlsX.

Its subcellular location is the cell inner membrane. The catalysed reaction is an acyl phosphate + sn-glycerol 3-phosphate = a 1-acyl-sn-glycero-3-phosphate + phosphate. Its pathway is lipid metabolism; phospholipid metabolism. In terms of biological role, catalyzes the transfer of an acyl group from acyl-phosphate (acyl-PO(4)) to glycerol-3-phosphate (G3P) to form lysophosphatidic acid (LPA). This enzyme utilizes acyl-phosphate as fatty acyl donor, but not acyl-CoA or acyl-ACP. The protein is Glycerol-3-phosphate acyltransferase of Chlorobium phaeobacteroides (strain DSM 266 / SMG 266 / 2430).